Here is a 56-residue protein sequence, read N- to C-terminus: Small ribosomal subunit protein uS14 (56 aa).

Cys-21, Cys-24, Cys-39, and Cys-42 together coordinate Zn(2+).

This sequence belongs to the universal ribosomal protein uS14 family. In terms of assembly, component of the 40S small ribosomal subunit. It depends on Zn(2+) as a cofactor.

It is found in the cytoplasm. The protein localises to the cytosol. The protein resides in the rough endoplasmic reticulum. The sequence is that of Small ribosomal subunit protein uS14 (RpS29) from Culex quinquefasciatus (Southern house mosquito).